We begin with the raw amino-acid sequence, 512 residues long: Glutathione-binding protein GsiB (512 aa).

Residues 1-26 (MARAVHRSGLVALGIATALMASCAFA) form the signal peptide.

This sequence belongs to the bacterial solute-binding protein 5 family. The complex is composed of two ATP-binding proteins (GsiA), two transmembrane proteins (GsiC and GsiD) and a solute-binding protein (GsiB).

It localises to the periplasm. In terms of biological role, part of the ABC transporter complex GsiABCD involved in glutathione import. Binds glutathione. The sequence is that of Glutathione-binding protein GsiB from Escherichia coli O157:H7.